We begin with the raw amino-acid sequence, 349 residues long: Fructose-1,6-bisphosphatase class 1 (349 aa).

Mg(2+) contacts are provided by Glu113, Asp135, Ile137, and Asp138. Residues 138-141 (DGSS), Asn230, Tyr258, and Lys288 contribute to the substrate site. Glu294 serves as a coordination point for Mg(2+).

This sequence belongs to the FBPase class 1 family. In terms of assembly, homotetramer. Mg(2+) serves as cofactor.

It localises to the cytoplasm. The enzyme catalyses beta-D-fructose 1,6-bisphosphate + H2O = beta-D-fructose 6-phosphate + phosphate. The protein operates within carbohydrate biosynthesis; Calvin cycle. The polypeptide is Fructose-1,6-bisphosphatase class 1 (Trichormus variabilis (strain ATCC 29413 / PCC 7937) (Anabaena variabilis)).